A 282-amino-acid chain; its full sequence is DNA-3-methyladenine glycosylase 2 (282 aa).

Catalysis depends on D238, which acts as the Proton acceptor.

It belongs to the alkylbase DNA glycosidase AlkA family. Monomer.

It catalyses the reaction Hydrolysis of alkylated DNA, releasing 3-methyladenine, 3-methylguanine, 7-methylguanine and 7-methyladenine.. Hydrolysis of the deoxyribose N-glycosidic bond to excise 3-methyladenine, 3-methylguanine, 7-methylguanine, O2-methylthymine, and O2-methylcytosine from the damaged DNA polymer formed by alkylation lesions. In Escherichia coli (strain K12), this protein is DNA-3-methyladenine glycosylase 2 (alkA).